The chain runs to 1118 residues: Ubiquitin carboxyl-terminal hydrolase 8 (1118 aa).

The MIT domain occupies 33 to 116; that stretch reads TKSYVHSALK…ESLKLRYEEA (84 aa). 2 stretches are compositionally biased toward basic and acidic residues: residues 120–146 and 158–177; these read KKLEEKDRQEEAQRLQQKRQETGREDG and LDSKDKTQKSNGEKNEKCET. The tract at residues 120–177 is disordered; that stretch reads KKLEEKDRQEEAQRLQQKRQETGREDGGTLAKGSLENVLDSKDKTQKSNGEKNEKCET. Position 160 is a phosphoserine (serine 160). The region spanning 195–313 is the Rhodanese domain; that stretch reads KNISLIIMDA…WLLCYPQYTT (119 aa). Phosphoserine occurs at positions 392 and 400. The disordered stretch occupies residues 402–447; the sequence is KNVPQIDRTKKPAVKLPEEHRIKSESTNHEQQSPQSGKVIPDRSTK. The SH3-binding signature appears at 405–413; it reads PQIDRTKKP. Over residues 417–429 the composition is skewed to basic and acidic residues; it reads LPEEHRIKSESTN. Phosphoserine is present on serine 452. The span at 475–573 shows a compositional bias: basic and acidic residues; the sequence is KNKQEKELRE…AKKSVEDRGK (99 aa). 2 disordered regions span residues 475–648 and 679–746; these read KNKQ…GRIV and YPPE…ENKP. Threonine 577 carries the post-translational modification Phosphothreonine. A compositionally biased stretch (basic and acidic residues) spans 618 to 645; it reads TFREDTDDTERNKAQREPLTRARSEEMG. Polar residues predominate over residues 716 to 726; the sequence is SYSSPDITQAI. Serine 718 and serine 719 each carry phosphoserine. In terms of domain architecture, USP spans 777–1109; sequence TGLRNLGNTC…AAYILFYTSL (333 aa). Cysteine 786 (nucleophile) is an active-site residue. Residue threonine 945 is modified to Phosphothreonine. The active-site Proton acceptor is the histidine 1067.

This sequence belongs to the peptidase C19 family. Forms a ternary complex with RNF128 and OTUB1. Interacts (via C-terminal UCH catalytic domain) with OTUB1 isoform 1. Interacts with STAM2 (via SH3 domain). Interacts with DNAJB3, EGFR, EPS15, RASGRF1, RNF41, YWHAE, YWHAG and YWHAZ. Interacts with NBR1, RASGRF1, RNF41 and IST1. Associates with the ESCRT-0 complex and with microtubules. Interacts with BIRC6/bruce and KIF23/MKLP1. As to quaternary structure, (Microbial infection) Interacts with Zika virus non-structural protein 1. Post-translationally, phosphorylation of Ser-718 is essential for interaction with YWHAE and for cytosol localization. Undergoes dephosphorylation at Ser-718 in the M phase. Tyrosine-phosphorylated in its N-terminal half in an EGFR-dependent manner. In terms of processing, ubiquitinated. Inactive form is mostly monoubiquitinated, but polyubiquitination happens too. Ubiquitination is increased in EGF-stimulated cells. Ubiquitination of active form is undetectable, suggesting a possibility that USP8 deubiquitinates itself, thereby regulating its own function.

The protein resides in the cytoplasm. Its subcellular location is the nucleus. It is found in the endosome membrane. It localises to the cell membrane. The enzyme catalyses Thiol-dependent hydrolysis of ester, thioester, amide, peptide and isopeptide bonds formed by the C-terminal Gly of ubiquitin (a 76-residue protein attached to proteins as an intracellular targeting signal).. Hydrolase that can remove conjugated ubiquitin from proteins and therefore plays an important regulatory role at the level of protein turnover by preventing degradation. Converts both 'Lys-48' an 'Lys-63'-linked ubiquitin chains. Catalytic activity is enhanced in the M phase. Involved in cell proliferation. Required to enter into S phase in response to serum stimulation. May regulate T-cell anergy mediated by RNF128 via the formation of a complex containing RNF128 and OTUB1. Probably regulates the stability of STAM2 and RASGRF1. Regulates endosomal ubiquitin dynamics, cargo sorting, membrane traffic at early endosomes, and maintenance of ESCRT-0 stability. The level of protein ubiquitination on endosomes is essential for maintaining the morphology of the organelle. Deubiquitinates EPS15 and controls tyrosine kinase stability. Removes conjugated ubiquitin from EGFR thus regulating EGFR degradation and downstream MAPK signaling. Involved in acrosome biogenesis through interaction with the spermatid ESCRT-0 complex and microtubules. Deubiquitinates BIRC6/bruce and KIF23/MKLP1. Deubiquitinates BACE1 which inhibits BACE1 lysosomal degradation and modulates BACE-mediated APP cleavage and amyloid-beta formation. The protein is Ubiquitin carboxyl-terminal hydrolase 8 of Homo sapiens (Human).